Consider the following 325-residue polypeptide: D-alanine--D-alanine ligase (325 aa).

In terms of domain architecture, ATP-grasp spans 121–316 (KYVFEGCGLP…FEELVVRILR (196 aa)). 147–202 (VAALGTPLSVKPAHEGSSIGIRKVNSAAELAEAYEAAARLDDLVLVEQWIEGPEFT) is an ATP binding site. Mg(2+) is bound by residues Asp-270, Glu-283, and Asn-285.

Belongs to the D-alanine--D-alanine ligase family. It depends on Mg(2+) as a cofactor. Requires Mn(2+) as cofactor.

The protein resides in the cytoplasm. The catalysed reaction is 2 D-alanine + ATP = D-alanyl-D-alanine + ADP + phosphate + H(+). It functions in the pathway cell wall biogenesis; peptidoglycan biosynthesis. Its function is as follows. Cell wall formation. This is D-alanine--D-alanine ligase from Marinobacter nauticus (strain ATCC 700491 / DSM 11845 / VT8) (Marinobacter aquaeolei).